The primary structure comprises 102 residues: ATP-dependent Clp protease adapter protein ClpS (102 aa).

The protein belongs to the ClpS family. In terms of assembly, binds to the N-terminal domain of the chaperone ClpA.

Involved in the modulation of the specificity of the ClpAP-mediated ATP-dependent protein degradation. This Shewanella piezotolerans (strain WP3 / JCM 13877) protein is ATP-dependent Clp protease adapter protein ClpS.